Here is a 131-residue protein sequence, read N- to C-terminus: C-glycoside deglycosidase beta subunit (131 aa).

It belongs to the C-glycoside deglycosidase beta subunit family. In terms of assembly, heterodimer composed of an alpha subunit (CarB1) and a beta subunit (CarC1). The cofactor is Mg(2+).

It carries out the reaction 3''-dehydroisovitexin = 1,5-anhydro-D-erythro-hex-1-en-3-ulose + apigenin. Activity is strongly reduced in the presence of chelating agents. In terms of biological role, carbon-carbon bond-cleaving enzyme which participates in the metabolism of C-glycosides. Acts on the C6-glycosylated compound 3''-dehydroisovitexin (3''-oxo-isovitexin). Shows weak activity with 3''-dehydroisoorientin (3''-oxo-homoorientin) and 3'-dehydromangiferin (3'-oxo-mangiferin). The protein is C-glycoside deglycosidase beta subunit of Arthrobacter globiformis (strain ATCC 8010 / DSM 20124 / JCM 1332 / NBRC 12137 / NCIMB 8907 / NRRL B-2979 / 168).